We begin with the raw amino-acid sequence, 89 residues long: Elongation factor 1-beta (89 aa).

Belongs to the EF-1-beta/EF-1-delta family.

Functionally, promotes the exchange of GDP for GTP in EF-1-alpha/GDP, thus allowing the regeneration of EF-1-alpha/GTP that could then be used to form the ternary complex EF-1-alpha/GTP/AAtRNA. This is Elongation factor 1-beta from Methanococcoides burtonii (strain DSM 6242 / NBRC 107633 / OCM 468 / ACE-M).